Here is a 1068-residue protein sequence, read N- to C-terminus: Huntingtin-interacting protein 1-related protein (1068 aa).

Met-1 is modified (N-acetylmethionine). The region spanning 23–151 (EREQFDKTQA…SFHLKHPQFP (129 aa)) is the ENTH domain. Residues 346–644 (GSMKDDRDLQ…LQDAVSKLDD (299 aa)) adopt a coiled-coil conformation. The tract at residues 582–610 (EALSQEQQRSSQEKGELRGQLAEKESQEQ) is disordered. Over residues 592 to 608 (SQEKGELRGQLAEKESQ) the composition is skewed to basic and acidic residues. Residues 771 to 1012 (SLDVRQEELG…ELRKQHYVLA (242 aa)) form the I/LWEQ domain. The segment at 867 to 924 (RWTEGLISASKAVGWGATQLVESADKVVLHMGKYEELIVCSHEIAASTAQLVAASKVK) is important for actin binding. A disordered region spans residues 1011-1068 (LAGGMGTPSEEEPSRPSPAPRSGATKKPPLAQKPSIAPRTDNQLDKKDGVYPAQLVNY).

The protein belongs to the SLA2 family. Homodimer. Interacts with actin; homodimerization promotes actin binding. Interacts with CLTB. Interacts with HIP1. Interacts (via ENTH and I/LWEQ domains) with BCL2L10. As to expression, widely expressed. Expressed at lower levels in skeletal muscle and heart. The level of expression does not change appreciably during development.

The protein localises to the cytoplasm. The protein resides in the perinuclear region. It is found in the endomembrane system. It localises to the cytoplasmic vesicle. Its subcellular location is the clathrin-coated vesicle membrane. Its function is as follows. Component of clathrin-coated pits and vesicles, that may link the endocytic machinery to the actin cytoskeleton. Binds 3-phosphoinositides (via ENTH domain). May act through the ENTH domain to promote cell survival by stabilizing receptor tyrosine kinases following ligand-induced endocytosis. The sequence is that of Huntingtin-interacting protein 1-related protein (Hip1r) from Mus musculus (Mouse).